Reading from the N-terminus, the 420-residue chain is 4-hydroxy-3-methylbut-2-en-1-yl diphosphate synthase (flavodoxin) (420 aa).

[4Fe-4S] cluster is bound by residues C307, C310, C353, and E360.

This sequence belongs to the IspG family. Requires [4Fe-4S] cluster as cofactor.

The catalysed reaction is (2E)-4-hydroxy-3-methylbut-2-enyl diphosphate + oxidized [flavodoxin] + H2O + 2 H(+) = 2-C-methyl-D-erythritol 2,4-cyclic diphosphate + reduced [flavodoxin]. It functions in the pathway isoprenoid biosynthesis; isopentenyl diphosphate biosynthesis via DXP pathway; isopentenyl diphosphate from 1-deoxy-D-xylulose 5-phosphate: step 5/6. Its function is as follows. Converts 2C-methyl-D-erythritol 2,4-cyclodiphosphate (ME-2,4cPP) into 1-hydroxy-2-methyl-2-(E)-butenyl 4-diphosphate. This is 4-hydroxy-3-methylbut-2-en-1-yl diphosphate synthase (flavodoxin) from Brucella suis biovar 1 (strain 1330).